A 287-amino-acid polypeptide reads, in one-letter code: Bifunctional protein FolD (287 aa).

NADP(+) contacts are provided by residues 160–162, Ser189, and Thr230; that span reads GRS.

Belongs to the tetrahydrofolate dehydrogenase/cyclohydrolase family. As to quaternary structure, homodimer.

The enzyme catalyses (6R)-5,10-methylene-5,6,7,8-tetrahydrofolate + NADP(+) = (6R)-5,10-methenyltetrahydrofolate + NADPH. The catalysed reaction is (6R)-5,10-methenyltetrahydrofolate + H2O = (6R)-10-formyltetrahydrofolate + H(+). It functions in the pathway one-carbon metabolism; tetrahydrofolate interconversion. Its function is as follows. Catalyzes the oxidation of 5,10-methylenetetrahydrofolate to 5,10-methenyltetrahydrofolate and then the hydrolysis of 5,10-methenyltetrahydrofolate to 10-formyltetrahydrofolate. The sequence is that of Bifunctional protein FolD from Chlamydia caviae (strain ATCC VR-813 / DSM 19441 / 03DC25 / GPIC) (Chlamydophila caviae).